The sequence spans 907 residues: DNA ligase 4 (907 aa).

Residues Glu273, Lys275, Arg280, Glu333, Phe378, Glu438, Lys443, Lys460, and Lys462 each contribute to the ATP site. The N6-AMP-lysine intermediate role is filled by Lys275. Position 333 (Glu333) interacts with Mg(2+). Glu438 provides a ligand contact to Mg(2+). 2 BRCT domains span residues 655 to 754 and 800 to 906; these read PVSN…ESDI and VPLF…HYQC.

Belongs to the ATP-dependent DNA ligase family. It depends on Mg(2+) as a cofactor.

Its subcellular location is the nucleus. It carries out the reaction ATP + (deoxyribonucleotide)n-3'-hydroxyl + 5'-phospho-(deoxyribonucleotide)m = (deoxyribonucleotide)n+m + AMP + diphosphate.. Its function is as follows. DNA ligase involved in DNA non-homologous end joining (NHEJ); required for double-strand break (DSB) repair. This chain is DNA ligase 4 (LIG4), found in Kluyveromyces lactis (strain ATCC 8585 / CBS 2359 / DSM 70799 / NBRC 1267 / NRRL Y-1140 / WM37) (Yeast).